The primary structure comprises 367 residues: Phosphoribosylaminoimidazole-succinocarboxamide synthase (367 aa).

It belongs to the SAICAR synthetase family.

The enzyme catalyses 5-amino-1-(5-phospho-D-ribosyl)imidazole-4-carboxylate + L-aspartate + ATP = (2S)-2-[5-amino-1-(5-phospho-beta-D-ribosyl)imidazole-4-carboxamido]succinate + ADP + phosphate + 2 H(+). The protein operates within purine metabolism; IMP biosynthesis via de novo pathway; 5-amino-1-(5-phospho-D-ribosyl)imidazole-4-carboxamide from 5-amino-1-(5-phospho-D-ribosyl)imidazole-4-carboxylate: step 1/2. The polypeptide is Phosphoribosylaminoimidazole-succinocarboxamide synthase (Shewanella putrefaciens (strain CN-32 / ATCC BAA-453)).